The following is a 396-amino-acid chain: GTPase Obg (396 aa).

One can recognise an Obg domain in the interval 1 to 159; that stretch reads MKFVDEATIY…RNIRLELKVL (159 aa). One can recognise an OBG-type G domain in the interval 160–333; that stretch reads ADVGLLGLPN…LCQDIMTWIE (174 aa). GTP is bound by residues 166 to 173, 191 to 195, 213 to 216, 283 to 286, and 314 to 316; these read GLPNAGKS, FTTLV, DIPG, NKTD, and SAL. Mg(2+) is bound by residues serine 173 and threonine 193. 2 disordered regions span residues 337 to 356 and 373 to 396; these read EEERDDPEVAEADRLNREQM and LARKKAKESDDDDDDEDVEVFYAP. Residues 347–356 are compositionally biased toward basic and acidic residues; the sequence is EADRLNREQM. Over residues 381-396 the composition is skewed to acidic residues; sequence SDDDDDDEDVEVFYAP.

Belongs to the TRAFAC class OBG-HflX-like GTPase superfamily. OBG GTPase family. In terms of assembly, monomer. It depends on Mg(2+) as a cofactor.

The protein resides in the cytoplasm. In terms of biological role, an essential GTPase which binds GTP, GDP and possibly (p)ppGpp with moderate affinity, with high nucleotide exchange rates and a fairly low GTP hydrolysis rate. Plays a role in control of the cell cycle, stress response, ribosome biogenesis and in those bacteria that undergo differentiation, in morphogenesis control. This chain is GTPase Obg, found in Hahella chejuensis (strain KCTC 2396).